The sequence spans 78 residues: Exodeoxyribonuclease 7 small subunit (78 aa).

It belongs to the XseB family. In terms of assembly, heterooligomer composed of large and small subunits.

Its subcellular location is the cytoplasm. It catalyses the reaction Exonucleolytic cleavage in either 5'- to 3'- or 3'- to 5'-direction to yield nucleoside 5'-phosphates.. Its function is as follows. Bidirectionally degrades single-stranded DNA into large acid-insoluble oligonucleotides, which are then degraded further into small acid-soluble oligonucleotides. This is Exodeoxyribonuclease 7 small subunit from Idiomarina loihiensis (strain ATCC BAA-735 / DSM 15497 / L2-TR).